A 1079-amino-acid polypeptide reads, in one-letter code: Transport and Golgi organization protein 6 homolog (1079 aa).

Residues 473-493 (VPVLLDSLLPLLRVFFSLYCF) form a helical membrane-spanning segment. Ser-561 carries the post-translational modification Phosphoserine. A disordered region spans residues 767–818 (AQSTLNQKDPGQKIEEQRQTSPDISTEGAQKPPRTGQGSSGPCTATSQPPGS). 2 stretches are compositionally biased toward polar residues: residues 785 to 794 (QTSPDISTEG) and 802 to 818 (GQGSSGPCTATSQPPGS). HEAT repeat units lie at residues 864–902 (LLQIFLENLEHEDSFVYLSAIQGIALLSDVYPEEILVDL) and 937–973 (SKYREPLIHTFLRGVRDPDAAHRASSLANLGELCQCL).

Belongs to the Tango6 family.

Its subcellular location is the membrane. In Mus musculus (Mouse), this protein is Transport and Golgi organization protein 6 homolog (Tango6).